We begin with the raw amino-acid sequence, 474 residues long: ATP-dependent rRNA helicase RRP3 (474 aa).

Residues 1-10 (MPSMKRRKLS) show a composition bias toward basic residues. The tract at residues 1–43 (MPSMKRRKLSHTPPQGEAEDGFSDSETSQASLQETPGNDEKIE) is disordered. Polar residues predominate over residues 24–36 (DSETSQASLQETP). Residues 48 to 76 (KSFKDLGIIDSLCEACDSLGYKAPTQIQA) carry the Q motif motif. Positions 79–250 (IPLALQGRDL…RASLSNPLRV (172 aa)) constitute a Helicase ATP-binding domain. Residue 92 to 99 (AETGSGKT) coordinates ATP. A DEAD box motif is present at residues 198 to 201 (DEAD). The region spanning 278 to 422 (YLIYLLNEFP…EYKVEKEEVM (145 aa)) is the Helicase C-terminal domain. Positions 442–474 (LHENRGKKGATLRNRRIGKGAKRSRDEMDREEG) are disordered. Basic residues predominate over residues 448-463 (KKGATLRNRRIGKGAK). The segment covering 464 to 474 (RSRDEMDREEG) has biased composition (basic and acidic residues).

The protein belongs to the DEAD box helicase family. DDX47/RRP3 subfamily. In terms of assembly, interacts with the SSU processome.

It localises to the nucleus. It catalyses the reaction ATP + H2O = ADP + phosphate + H(+). Its function is as follows. ATP-dependent rRNA helicase required for pre-ribosomal RNA processing. Involved in the maturation of the 35S-pre-rRNA and to its cleavage to mature 18S rRNA. This Coccidioides immitis (strain RS) (Valley fever fungus) protein is ATP-dependent rRNA helicase RRP3.